We begin with the raw amino-acid sequence, 280 residues long: F-box only protein 27 (280 aa).

The 48-residue stretch at 20–67 (VLDLSRLPPELLLLVLSHVPPRTLLMHCRRVCRAWRALVDGQALWLLL) folds into the F-box domain. Residues 101–277 (FCALRPLGRN…VTNSSVIIRV (177 aa)) enclose the FBA domain.

As to quaternary structure, part of a SCF (SKP1-cullin-F-box) protein ligase complex. Interacts with SKP1 and CUL1. As to expression, detected in brain, heart and muscle.

Functionally, substrate-recognition component of the SCF (SKP1-CUL1-F-box protein)-type E3 ubiquitin ligase complex. Able to recognize and bind complex-type oligosaccharides. This is F-box only protein 27 (Fbxo27) from Mus musculus (Mouse).